The sequence spans 292 residues: Expansin-B11 (292 aa).

The first 27 residues, 1–27 (MAKSCTLVLLLVALVGLSLLVSPIACS), serve as a signal peptide directing secretion. The N-linked (GlcNAc...) asparagine glycan is linked to Asn51. Positions 82–192 (GGACGYQTAV…RRVPCKYSGV (111 aa)) constitute an Expansin-like EG45 domain. 3 cysteine pairs are disulfide-bonded: Cys85–Cys114, Cys117–Cys187, and Cys122–Cys128. The region spanning 205 to 287 (FYFEVLIEFE…SWKPGVTYRS (83 aa)) is the Expansin-like CBD domain.

This sequence belongs to the expansin family. Expansin B subfamily. Expressed in internodes.

The protein localises to the secreted. Its subcellular location is the cell wall. The protein resides in the membrane. May cause loosening and extension of plant cell walls by disrupting non-covalent bonding between cellulose microfibrils and matrix glucans. No enzymatic activity has been found. May be required for rapid internodal elongation in deepwater rice during submergence. The polypeptide is Expansin-B11 (EXPB11) (Oryza sativa subsp. japonica (Rice)).